Reading from the N-terminus, the 515-residue chain is 2,3-bisphosphoglycerate-independent phosphoglycerate mutase (515 aa).

Positions 14 and 64 each coordinate Mn(2+). Ser64 functions as the Phosphoserine intermediate in the catalytic mechanism. Residues His125, 155–156, Arg187, Arg193, 263–266, and Lys337 contribute to the substrate site; these read RD and RADR. 5 residues coordinate Mn(2+): Asp404, His408, Asp445, His446, and His464.

The protein belongs to the BPG-independent phosphoglycerate mutase family. In terms of assembly, monomer. It depends on Mn(2+) as a cofactor.

It carries out the reaction (2R)-2-phosphoglycerate = (2R)-3-phosphoglycerate. It participates in carbohydrate degradation; glycolysis; pyruvate from D-glyceraldehyde 3-phosphate: step 3/5. Functionally, catalyzes the interconversion of 2-phosphoglycerate and 3-phosphoglycerate. The chain is 2,3-bisphosphoglycerate-independent phosphoglycerate mutase from Yersinia pseudotuberculosis serotype I (strain IP32953).